A 235-amino-acid polypeptide reads, in one-letter code: Large ribosomal subunit protein uL1 (235 aa).

It belongs to the universal ribosomal protein uL1 family. Part of the 50S ribosomal subunit.

Its function is as follows. Binds directly to 23S rRNA. The L1 stalk is quite mobile in the ribosome, and is involved in E site tRNA release. In terms of biological role, protein L1 is also a translational repressor protein, it controls the translation of the L11 operon by binding to its mRNA. In Blochmanniella floridana, this protein is Large ribosomal subunit protein uL1.